Here is a 613-residue protein sequence, read N- to C-terminus: TANK-binding kinase 1-binding protein 1 (613 aa).

Residues 1–280 (MESMFEDDIS…QDLASNQSEC (280 aa)) are homodimerization. Residues 48–162 (YGDIKERLGG…ALVETHLRQI (115 aa)) are a coiled coil. The residue at position 184 (Ser184) is a Phosphoserine. A coiled-coil region spans residues 218–277 (TSVSVSELERRRLEEALEAAQGEARGAQLREEQLQAECERLQGELKQLQETRAQDLASNQ). Residues 281–330 (GMAWVKRVGDDQVNLALAYTELTEELGRLRELSSLQGRILRTLLQEQARN) are interaction with TBK1 and IKBKE. A disordered region spans residues 328-457 (ARNAGQRHSP…HHAKAGFQGR (130 aa)). A compositionally biased stretch (pro residues) spans 346 to 361 (PACPSPSPPARPPPCA). The segment covering 362 to 372 (PCQSPAAQRRS) has biased composition (low complexity). Phosphoserine is present on residues Ser365, Ser372, Ser379, Ser385, Ser400, and Ser415. Residues 389 to 406 (PSCPSPVPQRRSPVPPSC) are compositionally biased toward pro residues. Pro residues predominate over residues 416–433 (PVPPSCPAPQPRPPPPPG). Residues Ser502 and Ser532 each carry the phosphoserine modification. The segment at 581–607 (IRSCPLCQLGFPVGYPDDALIKHIDSH) adopts a UBZ1-type zinc-finger fold. Positions 584, 587, 603, and 607 each coordinate Zn(2+).

Homodimer. May form a heterodimer with NAP1. Interacts with TKB1 and IKBKE. Weakly interacts with DDX3X.

Functionally, adapter protein which constitutively binds TBK1 and IKBKE playing a role in antiviral innate immunity. Essential for the efficient induction of IRF-dependent transcription following infection with Sendai virus. This chain is TANK-binding kinase 1-binding protein 1, found in Rattus norvegicus (Rat).